Reading from the N-terminus, the 344-residue chain is Ribosomal RNA large subunit methyltransferase Cfr (344 aa).

Residue Glu90 is the Proton acceptor of the active site. The Radical SAM core domain maps to 97 to 330 (KQGWESFCIS…ATVRTQFGSE (234 aa)). A disulfide bond links Cys104 and Cys335. Residues Cys111, Cys115, and Cys118 each contribute to the [4Fe-4S] cluster site. S-adenosyl-L-methionine-binding positions include 157-158 (GE), Ser188, 211-213 (SLH), and Asn292. Catalysis depends on Cys335, which acts as the S-methylcysteine intermediate.

Belongs to the radical SAM superfamily. RlmN family. Cfr subfamily. It depends on [4Fe-4S] cluster as a cofactor.

It is found in the cytoplasm. The catalysed reaction is adenosine(2503) in 23S rRNA + 2 reduced [2Fe-2S]-[ferredoxin] + 2 S-adenosyl-L-methionine = 8-methyladenosine(2503) in 23S rRNA + 5'-deoxyadenosine + L-methionine + 2 oxidized [2Fe-2S]-[ferredoxin] + S-adenosyl-L-homocysteine. In terms of biological role, specifically methylates position 8 of adenine 2503 in 23S rRNA. Confers resistance to some classes of antibiotics. This Clostridium botulinum (strain Hall / ATCC 3502 / NCTC 13319 / Type A) protein is Ribosomal RNA large subunit methyltransferase Cfr.